A 326-amino-acid polypeptide reads, in one-letter code: Glycolipid sulfotransferase MRA_1383 (326 aa).

Lys-40 to Trp-45 lines the 3'-phosphoadenylyl sulfate pocket. His-97 serves as the catalytic Proton acceptor. Arg-116–Ser-124 contacts 3'-phosphoadenylyl sulfate.

The protein belongs to the sulfotransferase 1 family.

Its function is as follows. Involved in the synthesis of cell wall sulfolipids. This chain is Glycolipid sulfotransferase MRA_1383, found in Mycobacterium tuberculosis (strain ATCC 25177 / H37Ra).